A 239-amino-acid chain; its full sequence is Large ribosomal subunit protein uL2 (239 aa).

Positions 200 to 239 are disordered; that stretch reads VNHPHGGKEHHIGRPSTVSRRAPPGRKVGHIAARRTGRRK. A compositionally biased stretch (basic residues) spans 222 to 239; the sequence is PPGRKVGHIAARRTGRRK.

This sequence belongs to the universal ribosomal protein uL2 family. Part of the 50S ribosomal subunit. Forms a bridge to the 30S subunit in the 70S ribosome.

Its function is as follows. One of the primary rRNA binding proteins. Required for association of the 30S and 50S subunits to form the 70S ribosome, for tRNA binding and peptide bond formation. It has been suggested to have peptidyltransferase activity; this is somewhat controversial. Makes several contacts with the 16S rRNA in the 70S ribosome. In Thermococcus gammatolerans (strain DSM 15229 / JCM 11827 / EJ3), this protein is Large ribosomal subunit protein uL2.